The primary structure comprises 484 residues: 6-phosphogluconate dehydrogenase, decarboxylating (484 aa).

NADP(+) contacts are provided by residues 11-16 (GLAVMG), 34-36 (NRT), 76-78 (VRA), and Asn104. Substrate-binding positions include Asn104 and 130–132 (SGG). Residue Lys185 is the Proton acceptor of the active site. 188–189 (HN) contacts substrate. Catalysis depends on Glu192, which acts as the Proton donor. Residues Tyr193, Lys262, Arg289, Arg447, and His453 each contribute to the substrate site.

This sequence belongs to the 6-phosphogluconate dehydrogenase family. As to quaternary structure, homodimer.

It carries out the reaction 6-phospho-D-gluconate + NADP(+) = D-ribulose 5-phosphate + CO2 + NADPH. The protein operates within carbohydrate degradation; pentose phosphate pathway; D-ribulose 5-phosphate from D-glucose 6-phosphate (oxidative stage): step 3/3. In terms of biological role, catalyzes the oxidative decarboxylation of 6-phosphogluconate to ribulose 5-phosphate and CO(2), with concomitant reduction of NADP to NADPH. The chain is 6-phosphogluconate dehydrogenase, decarboxylating (gnd) from Haemophilus ducreyi (strain 35000HP / ATCC 700724).